The primary structure comprises 249 residues: Derlin-2.2 (249 aa).

The Cytoplasmic portion of the chain corresponds to 1–21 (MAQAVEEWYRQMPIITRSYLT). A helical membrane pass occupies residues 22 to 42 (AAVVTTVGCTLEIISPYHLYL). Residues 43 to 96 (NPKLVVQHYEIWRLVTNFLYFRKMDLDFLFHMFFLARYCKLLEENSFRGRTADF) are Lumenal-facing. Residues 97–117 (FYMLLFGATVLTGIVLIGGMI) form a helical membrane-spanning segment. Residues 118-122 (PYISE) are Cytoplasmic-facing. The helical transmembrane segment at 123–143 (TFARILFLSNSLTFMMVYVWS) threads the bilayer. Residues 144–152 (KHNPFIHMS) lie on the Lumenal side of the membrane. Residues 153–173 (FLGLFTFTAAYLPWVLLGFSI) form a helical membrane-spanning segment. At 174 to 249 (LVGSSTWVDL…GAIGVDPQAQ (76 aa)) the chain is on the cytoplasmic side.

It belongs to the derlin family. As to expression, expressed in roots, stalks, leaves, immature ears, embryo and endosperm.

The protein resides in the endoplasmic reticulum membrane. In terms of biological role, may be involved in the degradation process of specific misfolded endoplasmic reticulum (ER) luminal proteins. This chain is Derlin-2.2 (DER2.2), found in Zea mays (Maize).